We begin with the raw amino-acid sequence, 102 residues long: uncharacterized protein (102 aa).

2 consecutive transmembrane segments (helical) span residues 33 to 55 (VLEL…LVVL) and 57 to 79 (VVGV…VVVA).

It localises to the membrane. This is an uncharacterized protein from Saccharomyces cerevisiae (strain ATCC 204508 / S288c) (Baker's yeast).